A 238-amino-acid polypeptide reads, in one-letter code: 7-cyano-7-deazaguanine synthase (238 aa).

ATP is bound at residue 14–24; it reads FSGGQDSTTCL. Residues C195, C204, C207, and C210 each contribute to the Zn(2+) site.

This sequence belongs to the QueC family. Requires Zn(2+) as cofactor.

It catalyses the reaction 7-carboxy-7-deazaguanine + NH4(+) + ATP = 7-cyano-7-deazaguanine + ADP + phosphate + H2O + H(+). Its pathway is purine metabolism; 7-cyano-7-deazaguanine biosynthesis. Its function is as follows. Catalyzes the ATP-dependent conversion of 7-carboxy-7-deazaguanine (CDG) to 7-cyano-7-deazaguanine (preQ(0)). This Baumannia cicadellinicola subsp. Homalodisca coagulata protein is 7-cyano-7-deazaguanine synthase.